The chain runs to 298 residues: uncharacterized protein (298 aa).

This is an uncharacterized protein from Archaeoglobus fulgidus (strain ATCC 49558 / DSM 4304 / JCM 9628 / NBRC 100126 / VC-16).